The following is a 460-amino-acid chain: Argininosuccinate lyase (460 aa).

The protein belongs to the lyase 1 family. Argininosuccinate lyase subfamily.

The protein localises to the cytoplasm. It catalyses the reaction 2-(N(omega)-L-arginino)succinate = fumarate + L-arginine. It participates in amino-acid biosynthesis; L-arginine biosynthesis; L-arginine from L-ornithine and carbamoyl phosphate: step 3/3. This Prosthecochloris aestuarii (strain DSM 271 / SK 413) protein is Argininosuccinate lyase.